Consider the following 77-residue polypeptide: Coiled-coil-helix-coiled-coil-helix domain-containing protein C550.01c (77 aa).

In terms of domain architecture, CHCH spans 24-65; the sequence is KGGCVEEHLRLNDCYWDTHDWRKCTEQMEEFRKCWEKRHGPL. 2 short sequence motifs (cx9C motif) span residues 27–37 and 47–57; these read CVEEHLRLNDC and CTEQMEEFRKC. 2 disulfides stabilise this stretch: cysteine 27-cysteine 57 and cysteine 37-cysteine 47.

It localises to the cytoplasm. The protein resides in the nucleus. The chain is Coiled-coil-helix-coiled-coil-helix domain-containing protein C550.01c from Schizosaccharomyces pombe (strain 972 / ATCC 24843) (Fission yeast).